The following is a 169-amino-acid chain: uncharacterized protein (169 aa).

The 62-residue stretch at 18 to 79 (LDRADVALLN…IVSPKAVGRP (62 aa)) folds into the HTH asnC-type domain. A DNA-binding region (H-T-H motif) is located at residues 37–56 (SEELADKVGLSPTACQRRLK).

This is an uncharacterized protein from Sinorhizobium fredii (strain NBRC 101917 / NGR234).